The sequence spans 407 residues: Transcriptional regulator UL34 (407 aa).

A disordered region spans residues 268–330 (AAGPPEADEN…ENEEEEEELF (63 aa)). The segment covering 273–286 (EADENNDEGEEDDD) has biased composition (acidic residues). Positions 287–301 (ELRHSDPAPLHDSKK) are enriched in basic and acidic residues. Residues 302-312 (PRNARRPRTRV) are compositionally biased toward basic residues.

It belongs to the HHV-5 UL34 protein family.

It localises to the host nucleus. In terms of biological role, acts as a transcriptional repressor of the US3 gene expression through a specific DNA sequence named the transcriptional repressive element (tre). This is Transcriptional regulator UL34 (UL34) from Homo sapiens (Human).